We begin with the raw amino-acid sequence, 193 residues long: Ribonuclease HII (193 aa).

Residues 1 to 193 form the RNase H type-2 domain; that stretch reads MTLGIDEAGR…SFALKNNWFS (193 aa). A divalent metal cation is bound by residues Asp6, Glu7, and Asp103.

This sequence belongs to the RNase HII family. The cofactor is Mn(2+). Mg(2+) serves as cofactor.

Its subcellular location is the cytoplasm. The catalysed reaction is Endonucleolytic cleavage to 5'-phosphomonoester.. In terms of biological role, endonuclease that specifically degrades the RNA of RNA-DNA hybrids. The sequence is that of Ribonuclease HII from Helicobacter acinonychis (strain Sheeba).